A 475-amino-acid chain; its full sequence is Sulfate adenylyltransferase subunit 1 (475 aa).

The tr-type G domain maps to 25–240 (KSLLRFLTCG…VLETVEVINL (216 aa)). The G1 stretch occupies residues 34 to 41 (GSVDDGKS). A GTP-binding site is contributed by 34–41 (GSVDDGKS). The tract at residues 92-96 (GITID) is G2. The interval 113–116 (DTPG) is G3. Residues 113-117 (DTPGH) and 168-171 (NKMD) each bind GTP. The segment at 168-171 (NKMD) is G4. Residues 206–208 (SAL) are G5.

It belongs to the TRAFAC class translation factor GTPase superfamily. Classic translation factor GTPase family. CysN/NodQ subfamily. As to quaternary structure, heterodimer composed of CysD, the smaller subunit, and CysN.

The enzyme catalyses sulfate + ATP + H(+) = adenosine 5'-phosphosulfate + diphosphate. Its pathway is sulfur metabolism; hydrogen sulfide biosynthesis; sulfite from sulfate: step 1/3. In terms of biological role, with CysD forms the ATP sulfurylase (ATPS) that catalyzes the adenylation of sulfate producing adenosine 5'-phosphosulfate (APS) and diphosphate, the first enzymatic step in sulfur assimilation pathway. APS synthesis involves the formation of a high-energy phosphoric-sulfuric acid anhydride bond driven by GTP hydrolysis by CysN coupled to ATP hydrolysis by CysD. This chain is Sulfate adenylyltransferase subunit 1, found in Sodalis glossinidius (strain morsitans).